An 86-amino-acid chain; its full sequence is Cytochrome c oxidase subunit 12, mitochondrial (86 aa).

The CHCH domain maps to T30 to W73. The Cx9C motif motif lies at C33–C43. Disulfide bonds link C33/C65 and C43/C54. The short motif at C54–C65 is the Cx10C motif element.

The protein belongs to the cytochrome c oxidase subunit 6B family. As to quaternary structure, component of the cytochrome c oxidase (complex IV, CIV), a multisubunit enzyme composed of a catalytic core of 3 subunits and several supernumerary subunits. The complex exists as a monomer or a dimer and forms supercomplexes (SCs) in the inner mitochondrial membrane with ubiquinol-cytochrome c oxidoreductase (cytochrome b-c1 complex, complex III, CIII).

It localises to the mitochondrion inner membrane. It participates in energy metabolism; oxidative phosphorylation. Functionally, component of the cytochrome c oxidase, the last enzyme in the mitochondrial electron transport chain which drives oxidative phosphorylation. The respiratory chain contains 3 multisubunit complexes succinate dehydrogenase (complex II, CII), ubiquinol-cytochrome c oxidoreductase (cytochrome b-c1 complex, complex III, CIII) and cytochrome c oxidase (complex IV, CIV), that cooperate to transfer electrons derived from NADH and succinate to molecular oxygen, creating an electrochemical gradient over the inner membrane that drives transmembrane transport and the ATP synthase. Cytochrome c oxidase is the component of the respiratory chain that catalyzes the reduction of oxygen to water. Electrons originating from reduced cytochrome c in the intermembrane space (IMS) are transferred via the dinuclear copper A center (CU(A)) of subunit 2 and heme A of subunit 1 to the active site in subunit 1, a binuclear center (BNC) formed by heme A3 and copper B (CU(B)). The BNC reduces molecular oxygen to 2 water molecules using 4 electrons from cytochrome c in the IMS and 4 protons from the mitochondrial matrix. The sequence is that of Cytochrome c oxidase subunit 12, mitochondrial (cox12) from Schizosaccharomyces pombe (strain 972 / ATCC 24843) (Fission yeast).